The sequence spans 448 residues: Rhodanese-like domain-containing protein 8, chloroplastic (448 aa).

A chloroplast-targeting transit peptide spans Met-1–Lys-23. Residues Ser-220–Trp-323 form the Rhodanese domain. Cys-283 functions as the Cysteine persulfide intermediate in the catalytic mechanism.

The protein localises to the plastid. The protein resides in the chloroplast. The sequence is that of Rhodanese-like domain-containing protein 8, chloroplastic (STR8) from Arabidopsis thaliana (Mouse-ear cress).